Here is a 461-residue protein sequence, read N- to C-terminus: Cysteine--tRNA ligase (461 aa).

Cysteine 30 serves as a coordination point for Zn(2+). The 'HIGH' region signature appears at 32 to 42; sequence PTVYSYAHIGN. Zn(2+) is bound by residues cysteine 212, histidine 237, and glutamate 241. The short motif at 270 to 274 is the 'KMSKS' region element; it reads KMSKS. Position 273 (lysine 273) interacts with ATP.

Belongs to the class-I aminoacyl-tRNA synthetase family. Monomer. Zn(2+) serves as cofactor.

Its subcellular location is the cytoplasm. It catalyses the reaction tRNA(Cys) + L-cysteine + ATP = L-cysteinyl-tRNA(Cys) + AMP + diphosphate. This Maricaulis maris (strain MCS10) (Caulobacter maris) protein is Cysteine--tRNA ligase.